The primary structure comprises 157 residues: uncharacterized protein (157 aa).

The N-acetyltransferase domain maps to 9–154 (LLINYKTLDE…ETNLNAVTNE (146 aa)).

This is an uncharacterized protein from Bacillus cereus (strain G9842).